The sequence spans 456 residues: Phosphatidylinositol N-acetylglucosaminyltransferase gpi3 subunit (456 aa).

It belongs to the glycosyltransferase group 1 family. Glycosyltransferase 4 subfamily. In terms of assembly, component of a Phosphatidylinositol N-acetylglucosaminyltransferase complex.

The catalysed reaction is a 1,2-diacyl-sn-glycero-3-phospho-(1D-myo-inositol) + UDP-N-acetyl-alpha-D-glucosamine = a 6-(N-acetyl-alpha-D-glucosaminyl)-1-(1,2-diacyl-sn-glycero-3-phospho)-1D-myo-inositol + UDP + H(+). It functions in the pathway glycolipid biosynthesis; glycosylphosphatidylinositol-anchor biosynthesis. Functionally, catalytic subunit in the complex catalyzing the transfer of N-acetylglucosamine from UDP-N-acetylglucosamine to phosphatidylinositol, the first step of GPI biosynthesis. In Schizosaccharomyces pombe (strain 972 / ATCC 24843) (Fission yeast), this protein is Phosphatidylinositol N-acetylglucosaminyltransferase gpi3 subunit (gpi3).